Consider the following 198-residue polypeptide: Phosphoheptose isomerase (198 aa).

An SIS domain is found at Ala-36–Val-195. Residue Asn-51–Gly-53 coordinates substrate. Positions 60 and 64 each coordinate Zn(2+). Substrate is bound by residues Glu-64, Asn-93–Asp-94, Ser-119–Ser-121, Ser-124, and Gln-171. Zn(2+) contacts are provided by Gln-171 and His-179.

It belongs to the SIS family. GmhA subfamily. Zn(2+) serves as cofactor.

It localises to the cytoplasm. The enzyme catalyses 2 D-sedoheptulose 7-phosphate = D-glycero-alpha-D-manno-heptose 7-phosphate + D-glycero-beta-D-manno-heptose 7-phosphate. The protein operates within carbohydrate biosynthesis; D-glycero-D-manno-heptose 7-phosphate biosynthesis; D-glycero-alpha-D-manno-heptose 7-phosphate and D-glycero-beta-D-manno-heptose 7-phosphate from sedoheptulose 7-phosphate: step 1/1. Its pathway is cell surface structure biogenesis; S-layer biogenesis. Catalyzes the isomerization of sedoheptulose 7-phosphate in D-glycero-D-manno-heptose 7-phosphate. This Aneurinibacillus thermoaerophilus protein is Phosphoheptose isomerase.